Consider the following 183-residue polypeptide: NADH-quinone oxidoreductase subunit A (183 aa).

3 consecutive transmembrane segments (helical) span residues 11 to 31 (IIAF…VPLL), 63 to 83 (FYLV…LYAW), and 98 to 118 (VVIF…VGAL). The tract at residues 159–183 (TGQIPAQSSGRVKSKTTPALSSEKE) is disordered.

It belongs to the complex I subunit 3 family. As to quaternary structure, NDH-1 is composed of 14 different subunits. Subunits NuoA, H, J, K, L, M, N constitute the membrane sector of the complex.

It localises to the cell inner membrane. The catalysed reaction is a quinone + NADH + 5 H(+)(in) = a quinol + NAD(+) + 4 H(+)(out). Functionally, NDH-1 shuttles electrons from NADH, via FMN and iron-sulfur (Fe-S) centers, to quinones in the respiratory chain. The immediate electron acceptor for the enzyme in this species is believed to be ubiquinone. Couples the redox reaction to proton translocation (for every two electrons transferred, four hydrogen ions are translocated across the cytoplasmic membrane), and thus conserves the redox energy in a proton gradient. The polypeptide is NADH-quinone oxidoreductase subunit A (Acinetobacter baumannii (strain AYE)).